Reading from the N-terminus, the 359-residue chain is Membrane-bound lytic murein transglycosylase C (359 aa).

Positions 1–16 (MKKYLALALIAPLLIS) are cleaved as a signal peptide. Cys17 carries N-palmitoyl cysteine lipidation. Cys17 carries the S-diacylglycerol cysteine lipid modification.

The protein belongs to the transglycosylase Slt family.

It is found in the cell outer membrane. It catalyses the reaction Exolytic cleavage of the (1-&gt;4)-beta-glycosidic linkage between N-acetylmuramic acid (MurNAc) and N-acetylglucosamine (GlcNAc) residues in peptidoglycan, from either the reducing or the non-reducing ends of the peptidoglycan chains, with concomitant formation of a 1,6-anhydrobond in the MurNAc residue.. Its function is as follows. Murein-degrading enzyme. May play a role in recycling of muropeptides during cell elongation and/or cell division. The polypeptide is Membrane-bound lytic murein transglycosylase C (Shigella sonnei (strain Ss046)).